The sequence spans 91 residues: Potassium channel toxin TstKMK (91 aa).

The first 25 residues, 1-25 (MVATNRCCVFALLFALLLVHSLTEA), serve as a signal peptide directing secretion. Positions 26 to 42 (GKGKEILGKIKEKIIEA) are excised as a propeptide. Residues 58–91 (EYACPAIDKFCEDHCAAKKAVGKCDDFKCKCIKL) form the BetaSPN-type CS-alpha/beta domain. 3 cysteine pairs are disulfide-bonded: Cys61/Cys81, Cys68/Cys86, and Cys72/Cys88.

Belongs to the long chain scorpion toxin family. Class 2 subfamily. As to expression, expressed by the venom gland.

It is found in the secreted. In terms of biological role, the full peptide presents antibacterial and cytotoxic activities. The synthetic C-terminus (AA 33-76) inhibits voltage-gated potassium channels Kv1.1/KCNA1, Kv1.2/KCNA2, and Kv1.3/KCNA3. This chain is Potassium channel toxin TstKMK, found in Tityus stigmurus (Brazilian scorpion).